Here is a 724-residue protein sequence, read N- to C-terminus: Ribosomal RNA large subunit methyltransferase K/L (724 aa).

One can recognise a THUMP domain in the interval 42–153; sequence DAQRLVLWSR…KGRATLSVDL (112 aa).

Belongs to the methyltransferase superfamily. RlmKL family.

It localises to the cytoplasm. The enzyme catalyses guanosine(2445) in 23S rRNA + S-adenosyl-L-methionine = N(2)-methylguanosine(2445) in 23S rRNA + S-adenosyl-L-homocysteine + H(+). The catalysed reaction is guanosine(2069) in 23S rRNA + S-adenosyl-L-methionine = N(2)-methylguanosine(2069) in 23S rRNA + S-adenosyl-L-homocysteine + H(+). Specifically methylates the guanine in position 2445 (m2G2445) and the guanine in position 2069 (m7G2069) of 23S rRNA. The sequence is that of Ribosomal RNA large subunit methyltransferase K/L from Xylella fastidiosa (strain M23).